The primary structure comprises 303 residues: 4-hydroxy-tetrahydrodipicolinate synthase (303 aa).

T57 contributes to the pyruvate binding site. Catalysis depends on Y143, which acts as the Proton donor/acceptor. Residue K171 is the Schiff-base intermediate with substrate of the active site. I211 contributes to the pyruvate binding site.

Belongs to the DapA family. In terms of assembly, homotetramer; dimer of dimers.

The protein resides in the cytoplasm. It catalyses the reaction L-aspartate 4-semialdehyde + pyruvate = (2S,4S)-4-hydroxy-2,3,4,5-tetrahydrodipicolinate + H2O + H(+). It functions in the pathway amino-acid biosynthesis; L-lysine biosynthesis via DAP pathway; (S)-tetrahydrodipicolinate from L-aspartate: step 3/4. Functionally, catalyzes the condensation of (S)-aspartate-beta-semialdehyde [(S)-ASA] and pyruvate to 4-hydroxy-tetrahydrodipicolinate (HTPA). The protein is 4-hydroxy-tetrahydrodipicolinate synthase of Bifidobacterium animalis subsp. lactis (strain AD011).